Reading from the N-terminus, the 289-residue chain is Bis(5'-nucleosyl)-tetraphosphatase, symmetrical (289 aa).

It belongs to the Ap4A hydrolase family.

The catalysed reaction is P(1),P(4)-bis(5'-adenosyl) tetraphosphate + H2O = 2 ADP + 2 H(+). Its function is as follows. Hydrolyzes diadenosine 5',5'''-P1,P4-tetraphosphate to yield ADP. This Yersinia pseudotuberculosis serotype IB (strain PB1/+) protein is Bis(5'-nucleosyl)-tetraphosphatase, symmetrical.